The chain runs to 168 residues: tRNA-splicing endonuclease (168 aa).

Catalysis depends on residues Y107, H114, and K145.

It belongs to the tRNA-intron endonuclease family. Archaeal short subfamily. Homotetramer; although the tetramer contains four active sites, only two participate in the cleavage. Therefore, it should be considered as a dimer of dimers.

It catalyses the reaction pretRNA = a 3'-half-tRNA molecule with a 5'-OH end + a 5'-half-tRNA molecule with a 2',3'-cyclic phosphate end + an intron with a 2',3'-cyclic phosphate and a 5'-hydroxyl terminus.. Functionally, endonuclease that removes tRNA introns. Cleaves pre-tRNA at the 5'- and 3'-splice sites to release the intron. The products are an intron and two tRNA half-molecules bearing 2',3' cyclic phosphate and 5'-OH termini. Recognizes a pseudosymmetric substrate in which 2 bulged loops of 3 bases are separated by a stem of 4 bp. The chain is tRNA-splicing endonuclease from Thermococcus kodakarensis (strain ATCC BAA-918 / JCM 12380 / KOD1) (Pyrococcus kodakaraensis (strain KOD1)).